The sequence spans 403 residues: Flavohemoprotein (403 aa).

A Globin domain is found at 1–138 (MLTQKTKDIV…LADVLMGMES (138 aa)). Residue H85 coordinates heme b. Active-site charge relay system residues include Y95 and E137. Positions 149–403 (GGWKGWRTFV…EVFGPDLFAE (255 aa)) are reductase. The FAD-binding FR-type domain maps to 152 to 262 (KGWRTFVIRE…AAPYGSFHID (111 aa)). FAD contacts are provided by residues Y190 and 206 to 209 (RQYS). Position 275-280 (275-280 (GVGLTP)) interacts with NADP(+). 395–398 (VFGP) provides a ligand contact to FAD.

This sequence belongs to the globin family. Two-domain flavohemoproteins subfamily. In the C-terminal section; belongs to the flavoprotein pyridine nucleotide cytochrome reductase family. As to quaternary structure, monomer. FAD serves as cofactor. The cofactor is heme b.

The protein resides in the cytoplasm. The catalysed reaction is 2 nitric oxide + NADPH + 2 O2 = 2 nitrate + NADP(+) + H(+). It catalyses the reaction 2 nitric oxide + NADH + 2 O2 = 2 nitrate + NAD(+) + H(+). Functionally, is involved in NO detoxification in an aerobic process, termed nitric oxide dioxygenase (NOD) reaction that utilizes O(2) and NAD(P)H to convert NO to nitrate, which protects the bacterium from various noxious nitrogen compounds. Therefore, plays a central role in the inducible response to nitrosative stress. In terms of biological role, in the presence of oxygen and NADH, FHP has NADH oxidase activity, which leads to the generation of superoxide and H(2)O(2), both in vitro and in vivo, and it has been suggested that FHP might act as an amplifier of superoxide stress. Under anaerobic conditions, FHP also exhibits nitric oxide reductase and FAD reductase activities. However, all these reactions are much lower than NOD activity. This Cupriavidus necator (strain ATCC 17699 / DSM 428 / KCTC 22496 / NCIMB 10442 / H16 / Stanier 337) (Ralstonia eutropha) protein is Flavohemoprotein (hmp).